A 255-amino-acid polypeptide reads, in one-letter code: 2,3-dehydroadipyl-CoA hydratase (255 aa).

The protein belongs to the enoyl-CoA hydratase/isomerase family.

The enzyme catalyses a (3S)-3-hydroxyacyl-CoA = a (2E)-enoyl-CoA + H2O. The catalysed reaction is a 4-saturated-(3S)-3-hydroxyacyl-CoA = a (3E)-enoyl-CoA + H2O. Its pathway is aromatic compound metabolism; phenylacetate degradation. Functionally, catalyzes the reversible conversion of enzymatically produced 2,3-dehydroadipyl-CoA into 3-hydroxyadipyl-CoA. This chain is 2,3-dehydroadipyl-CoA hydratase (paaF), found in Escherichia coli (strain K12).